Consider the following 153-residue polypeptide: Large ribosomal subunit protein bL27m (153 aa).

A mitochondrion-targeting transit peptide spans 1–37; that stretch reads MINQGLFIRVNNFQLLKASLAYKKASNILTFPPIRTS. The segment at 34-57 is disordered; the sequence is IRTSTKHGGGSSKNTGDSAGRRLG.

It belongs to the bacterial ribosomal protein bL27 family. In terms of assembly, component of the mitochondrial large ribosomal subunit (mt-LSU). Mature yeast 74S mitochondrial ribosomes consist of a small (37S) and a large (54S) subunit. The 37S small subunit contains a 15S ribosomal RNA (15S mt-rRNA) and at least 32 different proteins. The 54S large subunit contains a 21S rRNA (21S mt-rRNA) and at least 45 different proteins.

Its subcellular location is the mitochondrion. In terms of biological role, component of the mitochondrial ribosome (mitoribosome), a dedicated translation machinery responsible for the synthesis of mitochondrial genome-encoded proteins, including at least some of the essential transmembrane subunits of the mitochondrial respiratory chain. The mitoribosomes are attached to the mitochondrial inner membrane and translation products are cotranslationally integrated into the membrane. The protein is Large ribosomal subunit protein bL27m (mrp7) of Schizosaccharomyces pombe (strain 972 / ATCC 24843) (Fission yeast).